A 139-amino-acid chain; its full sequence is Protein Turandot B (139 aa).

A signal peptide spans 1 to 21; the sequence is MNFNMSMICFALLLIVTLCSA.

This sequence belongs to the Turandot family.

It localises to the secreted. A humoral factor that may play a role in stress tolerance. The sequence is that of Protein Turandot B from Drosophila yakuba (Fruit fly).